The chain runs to 64 residues: MRCVPVFVILLLLIASVPSVDAQLKTKDDMPLASSHANVKRTLQILRNKRCCITFESCCEFDLK.

The N-terminal stretch at 1–19 is a signal peptide; that stretch reads MRCVPVFVILLLLIASVPS. Residues 20–48 constitute a propeptide that is removed on maturation; the sequence is VDAQLKTKDDMPLASSHANVKRTLQILRN. Glutamate 56 and glutamate 60 each carry 4-carboxyglutamate.

Post-translationally, contains 2 disulfide bonds that can be either 'C1-C3, C2-C4' or 'C1-C4, C2-C3', since these disulfide connectivities have been observed for conotoxins with cysteine framework V (for examples, see AC P0DQQ7 and AC P81755). As to expression, expressed by the venom duct.

It localises to the secreted. The polypeptide is Conotoxin mr5.3 (Conus marmoreus (Marble cone)).